A 178-amino-acid chain; its full sequence is Putative RING-H2 finger protein ATL19 (178 aa).

Residues 11 to 31 form a helical membrane-spanning segment; it reads LISVLGLAVFIGLCILLVVLI. The RING-type; atypical zinc finger occupies 130–172; the sequence is CAICLSGYVVNEECRVFPVCRHIYHALCIDAWLKNHLTCPTCR.

It belongs to the RING-type zinc finger family. ATL subfamily.

It localises to the membrane. It carries out the reaction S-ubiquitinyl-[E2 ubiquitin-conjugating enzyme]-L-cysteine + [acceptor protein]-L-lysine = [E2 ubiquitin-conjugating enzyme]-L-cysteine + N(6)-ubiquitinyl-[acceptor protein]-L-lysine.. Its pathway is protein modification; protein ubiquitination. In Arabidopsis thaliana (Mouse-ear cress), this protein is Putative RING-H2 finger protein ATL19 (ATL19).